We begin with the raw amino-acid sequence, 438 residues long: Trigger factor (438 aa).

Residues 160–245 (DDKVVIDFVG…VKKIQEAQLP (86 aa)) form the PPIase FKBP-type domain.

The protein belongs to the FKBP-type PPIase family. Tig subfamily.

The protein localises to the cytoplasm. The enzyme catalyses [protein]-peptidylproline (omega=180) = [protein]-peptidylproline (omega=0). In terms of biological role, involved in protein export. Acts as a chaperone by maintaining the newly synthesized protein in an open conformation. Functions as a peptidyl-prolyl cis-trans isomerase. The protein is Trigger factor of Francisella philomiragia subsp. philomiragia (strain ATCC 25017 / CCUG 19701 / FSC 153 / O#319-036).